The primary structure comprises 347 residues: Fc receptor-like A (347 aa).

The signal sequence occupies residues 1–27 (MKLSCMLIEWALYVCPAVLLATQMSLA). Ig-like C2-type domains are found at residues 77 to 166 (PFHL…ETAS) and 179 to 257 (PVLK…RQIS). 2 disulfide bridges follow: Cys-106–Cys-150 and Cys-199–Cys-247. The disordered stretch occupies residues 272–296 (KPATPETPPPAKAPGPLPLLPTPSD). Over residues 276–292 (PETPPPAKAPGPLPLLP) the composition is skewed to pro residues.

In terms of assembly, monomer or homodimer; disulfide-linked.

It is found in the cytoplasm. Its function is as follows. May be implicated in B-cell differentiation and lymphomagenesis. The sequence is that of Fc receptor-like A (Fcrla) from Rattus norvegicus (Rat).